Here is a 2103-residue protein sequence, read N- to C-terminus: Orsellinic acid synthase (2103 aa).

Residues 17-232 (DAVHDLNVRS…KRPELAHATI (216 aa)) form an N-terminal acylcarrier protein transacylase domain (SAT) region. One can recognise a Ketosynthase family 3 (KS3) domain in the interval 348 to 782 (ADAIAVVGMS…GGNVSMLLQD (435 aa)). Active-site for beta-ketoacyl synthase activity residues include C525, H660, and H702. The segment at 881–1197 (VFTFTGQGAQ…RRGGDDWQSV (317 aa)) is malonyl-CoA:ACP transacylase (MAT) domain. S973 serves as the catalytic For acyl/malonyl transferase activity. The tract at residues 1272–1409 (HAVEKLQREE…GQPDSAVRRD (138 aa)) is N-terminal hotdog fold. The 311-residue stretch at 1272–1582 (HAVEKLQREE…FKKLERDFFA (311 aa)) folds into the PKS/mFAS DH domain. Residues 1303–1579 (GHVVDESAIC…DICFKKLERD (277 aa)) are product template (PT) domain. Residue H1304 is the Proton acceptor; for dehydratase activity of the active site. Residues 1433 to 1582 (VHAMDTALFY…FKKLERDFFA (150 aa)) form a C-terminal hotdog fold region. D1493 acts as the Proton donor; for dehydratase activity in catalysis. The segment at 1592–1638 (STKPVAAAPAKSMAKRARQLAPSPSPSSSSGSNTPMSRSPTPSSVSD) is disordered. 2 stretches are compositionally biased toward low complexity: residues 1594-1603 (KPVAAAPAKS) and 1617-1631 (PSSS…SRSP). Carrier domains follow at residues 1640-1716 (VDLG…GGSA) and 1741-1815 (PAPS…DDDA). An O-(pantetheine 4'-phosphoryl)serine modification is found at S1676. The interval 1722–1743 (EDITKPTPSPEQTQARKQGPAP) is disordered. S1775 is subject to O-(pantetheine 4'-phosphoryl)serine. The tract at residues 1809 to 1838 (EALDDDAEEESAPAQTSTNPAKETTIDSSR) is disordered. Residues 1810-1819 (ALDDDAEEES) show a composition bias toward acidic residues. Over residues 1823–1836 (QTSTNPAKETTIDS) the composition is skewed to polar residues. Residues 1849-2082 (ASYIHLKALP…TVNGDHFSMM (234 aa)) are thioesterase (TE) domain.

It carries out the reaction 3 malonyl-CoA + acetyl-CoA + 2 H(+) = orsellinate + 3 CO2 + 4 CoA. Its pathway is secondary metabolite biosynthesis. In terms of biological role, non-reducing polyketide synthase; part of the gene cluster that mediates the biosynthesis of orsellinic acid, as well as of the cathepsin K inhibitors F9775 A and F9775 B. The non-reducing polyketide synthase orsA produces orsellinic acid by condensing acetyl-CoA with 3 malonyl-CoA units. Further modifications by the decarboxylase orsB and the tyrosinase-like protein orsC lead to the production of F9775 A and F9775 B. The functions of orsD and orsE remain unclear since only orsB and orsC are required to convert orsellinic acid into F9775 A and F9775 B. This Emericella nidulans (strain FGSC A4 / ATCC 38163 / CBS 112.46 / NRRL 194 / M139) (Aspergillus nidulans) protein is Orsellinic acid synthase.